A 122-amino-acid chain; its full sequence is Small ribosomal subunit protein bS16 (122 aa).

Residues 85 to 122 (REAKNNPIKAKPGKRAQERAAEKAQKAADAAAAADAAE) form a disordered region. Positions 99–110 (RAQERAAEKAQK) are enriched in basic and acidic residues. Residues 111–122 (AADAAAAADAAE) are compositionally biased toward low complexity.

This sequence belongs to the bacterial ribosomal protein bS16 family.

This Rhizobium etli (strain ATCC 51251 / DSM 11541 / JCM 21823 / NBRC 15573 / CFN 42) protein is Small ribosomal subunit protein bS16.